Reading from the N-terminus, the 246-residue chain is 4-hydroxy-tetrahydrodipicolinate reductase (246 aa).

7–12 (GCSGRM) is a binding site for NAD(+). Arg-34 is a binding site for NADP(+). NAD(+)-binding positions include 76 to 78 (ATT) and 102 to 105 (CPNT). His-135 (proton donor/acceptor) is an active-site residue. His-136 serves as a coordination point for (S)-2,3,4,5-tetrahydrodipicolinate. Lys-139 serves as the catalytic Proton donor. 145–146 (GT) is a (S)-2,3,4,5-tetrahydrodipicolinate binding site.

The protein belongs to the DapB family.

It is found in the cytoplasm. It catalyses the reaction (S)-2,3,4,5-tetrahydrodipicolinate + NAD(+) + H2O = (2S,4S)-4-hydroxy-2,3,4,5-tetrahydrodipicolinate + NADH + H(+). The enzyme catalyses (S)-2,3,4,5-tetrahydrodipicolinate + NADP(+) + H2O = (2S,4S)-4-hydroxy-2,3,4,5-tetrahydrodipicolinate + NADPH + H(+). It functions in the pathway amino-acid biosynthesis; L-lysine biosynthesis via DAP pathway; (S)-tetrahydrodipicolinate from L-aspartate: step 4/4. Catalyzes the conversion of 4-hydroxy-tetrahydrodipicolinate (HTPA) to tetrahydrodipicolinate. The protein is 4-hydroxy-tetrahydrodipicolinate reductase of Chlamydia felis (strain Fe/C-56) (Chlamydophila felis).